Reading from the N-terminus, the 212-residue chain is Putative 3-methyladenine DNA glycosylase (212 aa).

This sequence belongs to the DNA glycosylase MPG family.

In Nocardia farcinica (strain IFM 10152), this protein is Putative 3-methyladenine DNA glycosylase.